We begin with the raw amino-acid sequence, 146 residues long: Leghemoglobin (146 aa).

In terms of domain architecture, Globin spans 3–146; the sequence is AFTEKQEALV…FAAGIKKAYA (144 aa). Nitrated tyrosine is present on residues Tyr26 and Tyr31. Ser46 contacts heme b. Residue Ser46 is modified to Phosphoserine. His62 contacts O2. 2 residues coordinate heme b: His93 and Lys96. Nitrated tyrosine is present on Tyr134.

This sequence belongs to the plant globin family. In terms of assembly, monomer. In terms of processing, nitrated mainly at Tyr-31 and, to a lower extent, at Tyr-26 and Tyr-134, in effective nodules and particularly in hypoxic conditions; this mechanism may play a protective role in the symbiosis by buffering toxic peroxynitrite NO(2)(-). Nitration level decrease during nodule senescence. Phosphorylation at Ser-46 disrupts the molecular environment of its porphyrin ring oxygen binding pocket, thus leading to a reduced oxygen consumption and to the delivery of oxygen O(2) to symbiosomes. Root nodules.

The protein localises to the cytoplasm. It is found in the cytosol. The protein resides in the nucleus. In terms of biological role, leghemoglobin that reversibly binds oxygen O(2) through a pentacoordinated heme iron. In root nodules, facilitates the diffusion of oxygen to the bacteroids while preventing the bacterial nitrogenase from being inactivated by buffering dioxygen, nitric oxide and carbon monoxide, and promoting the formation of reactive oxygen species (ROS, e.g. H(2)O(2)). This role is essential for symbiotic nitrogen fixation (SNF). The sequence is that of Leghemoglobin from Phaseolus vulgaris (Kidney bean).